The chain runs to 120 residues: Cytochrome c2 iso-1 (120 aa).

Gln-1 is modified (pyrrolidone carboxylic acid). Heme c-binding residues include Cys-15, Cys-18, His-19, and Met-98.

This sequence belongs to the cytochrome c family. Post-translationally, binds 1 heme c group covalently per subunit.

Functionally, cytochrome c2 is found mainly in purple, non-sulfur, photosynthetic bacteria where it functions as the electron donor to the oxidized bacteriochlorophyll in the photophosphorylation pathway. However, it may also have a role in the respiratory chain and is found in some non-photosynthetic bacteria. The chain is Cytochrome c2 iso-1 from Rhodospirillum centenum (Rhodocista centenaria).